The chain runs to 109 residues: Flagellar hook-basal body complex protein FliE (109 aa).

The protein belongs to the FliE family.

Its subcellular location is the bacterial flagellum basal body. This Pseudomonas fluorescens (strain SBW25) protein is Flagellar hook-basal body complex protein FliE.